The chain runs to 406 residues: Multidrug resistance protein MdtG (406 aa).

The next 11 membrane-spanning stretches (helical) occupy residues 16–36, 56–76, 90–110, 113–133, 144–164, 171–191, 222–242, 254–274, 288–308, 317–337, and 376–396; these read VAWL…PFLP, LVFS…GGLA, LGMA…QFLL, ALLG…ATQV, TLST…GLLA, PVFF…LFFT, LFVT…ILTL, IAFI…LSAP, ILIT…FVQT, FLLG…LVYN, and AVFC…WNSL.

The protein belongs to the major facilitator superfamily. DHA1 family. MdtG (TC 2.A.1.2.20) subfamily.

It localises to the cell inner membrane. This chain is Multidrug resistance protein MdtG, found in Citrobacter koseri (strain ATCC BAA-895 / CDC 4225-83 / SGSC4696).